A 137-amino-acid polypeptide reads, in one-letter code: Large ribosomal subunit protein bL12 (137 aa).

It belongs to the bacterial ribosomal protein bL12 family. Homodimer. Part of the ribosomal stalk of the 50S ribosomal subunit. Forms a multimeric L10(L12)X complex, where L10 forms an elongated spine to which 2 to 4 L12 dimers bind in a sequential fashion. Binds GTP-bound translation factors.

Its function is as follows. Forms part of the ribosomal stalk which helps the ribosome interact with GTP-bound translation factors. Is thus essential for accurate translation. In Gloeobacter violaceus (strain ATCC 29082 / PCC 7421), this protein is Large ribosomal subunit protein bL12.